Here is a 68-residue protein sequence, read N- to C-terminus: DNA gyrase inhibitor YacG (68 aa).

Positions 10, 13, 29, and 33 each coordinate Zn(2+).

This sequence belongs to the DNA gyrase inhibitor YacG family. In terms of assembly, interacts with GyrB. It depends on Zn(2+) as a cofactor.

Functionally, inhibits all the catalytic activities of DNA gyrase by preventing its interaction with DNA. Acts by binding directly to the C-terminal domain of GyrB, which probably disrupts DNA binding by the gyrase. This chain is DNA gyrase inhibitor YacG, found in Haemophilus influenzae (strain PittGG).